The following is a 548-amino-acid chain: Biotin-dependent acetyl-/propionyl-coenzyme A carboxylase beta5 subunit (548 aa).

The disordered stretch occupies residues 1–23; the sequence is MTSVTDRSAHSAERSTEHTIDIH. Over residues 7–21 the composition is skewed to basic and acidic residues; that stretch reads RSAHSAERSTEHTID. One can recognise a CoA carboxyltransferase N-terminal domain in the interval 25–281; it reads TAGKLAELHK…NNSTDAPRYQ (257 aa). One can recognise a CoA carboxyltransferase C-terminal domain in the interval 295 to 541; that stretch reads DEDLELDTLI…ERKIAQLPPK (247 aa).

It belongs to the AccD/PCCB family. As to quaternary structure, forms homohexamers. The biotin-dependent acyl-CoA carboxylase complex is composed of AccA3, which contains the biotin carboxylase (BC) and biotin carboxyl carrier protein (BCCP) domains, and AccD5, which contains the carboxyl transferase (CT) domain. The AccA3/AccD5 complex forms a dodecamer, and can associate with the epsilon subunit AccE5 (Rv3280), which stimulates carboxylation by the complex. Is also part of the long-chain acyl-CoA carboxylase (LCC) complex, which is composed of AccA3, AccD4, AccD5 and AccE5. The four subunits are essential for activity, but AccD5, together with AccE5, probably plays a structural role rather than a catalytic one.

The enzyme catalyses N(6)-carboxybiotinyl-L-lysyl-[protein] + acetyl-CoA = N(6)-biotinyl-L-lysyl-[protein] + malonyl-CoA. It carries out the reaction N(6)-carboxybiotinyl-L-lysyl-[protein] + propanoyl-CoA = methylmalonyl-CoA + N(6)-biotinyl-L-lysyl-[protein]. It functions in the pathway lipid metabolism; mycolic acid biosynthesis. With respect to regulation, carboxylase activity of the AccA3/AccD5 complex is stimulated by interaction with AccE5. In terms of biological role, component of a biotin-dependent acyl-CoA carboxylase complex. This subunit transfers the CO2 from carboxybiotin to the CoA ester substrate. When associated with the alpha3 subunit AccA3, is involved in the carboxylation of acetyl-CoA and propionyl-CoA, with a preference for propionyl-CoA. Is also required for the activity of the long-chain acyl-CoA carboxylase (LCC) complex. The sequence is that of Biotin-dependent acetyl-/propionyl-coenzyme A carboxylase beta5 subunit from Mycobacterium tuberculosis (strain ATCC 25618 / H37Rv).